An 878-amino-acid chain; its full sequence is Alanine--tRNA ligase (878 aa).

Residues His-570, His-574, Cys-672, and His-676 each contribute to the Zn(2+) site. A disordered region spans residues 844–864; sequence GGKGGGGRPDMAQAGGPDASA. Residues 855-864 show a composition bias toward low complexity; it reads AQAGGPDASA.

The protein belongs to the class-II aminoacyl-tRNA synthetase family. Zn(2+) is required as a cofactor.

The protein resides in the cytoplasm. It carries out the reaction tRNA(Ala) + L-alanine + ATP = L-alanyl-tRNA(Ala) + AMP + diphosphate. Functionally, catalyzes the attachment of alanine to tRNA(Ala) in a two-step reaction: alanine is first activated by ATP to form Ala-AMP and then transferred to the acceptor end of tRNA(Ala). Also edits incorrectly charged Ser-tRNA(Ala) and Gly-tRNA(Ala) via its editing domain. In Paramagnetospirillum magneticum (strain ATCC 700264 / AMB-1) (Magnetospirillum magneticum), this protein is Alanine--tRNA ligase.